The primary structure comprises 240 residues: Predicted GPI-anchored protein 58 (240 aa).

Positions Met-1 to Ala-18 are cleaved as a signal peptide. Residues His-41 to Thr-216 form a disordered region. The segment covering Thr-51–Pro-86 has biased composition (pro residues). The segment covering Glu-87 to Thr-103 has biased composition (low complexity). Pro residues-rich tracts occupy residues Pro-104 to Pro-137 and Ala-153 to Ser-192. The segment covering Ala-193–Thr-216 has biased composition (low complexity). Asn-207 carries N-linked (GlcNAc...) asparagine glycosylation. Residue Gly-219 is the site of GPI-anchor amidated glycine attachment. A propeptide spans Ala-220–Leu-240 (removed in mature form).

Its subcellular location is the cell membrane. The polypeptide is Predicted GPI-anchored protein 58 (PGA58) (Candida albicans (strain SC5314 / ATCC MYA-2876) (Yeast)).